Here is an 807-residue protein sequence, read N- to C-terminus: Putative transmembrane protein ORF807 (807 aa).

The next 5 membrane-spanning stretches (helical) occupy residues 210 to 230 (VLML…SDIL), 234 to 254 (GLST…IVYF), 270 to 290 (VTIQ…FVIL), 459 to 479 (ILIG…LVLT), and 657 to 677 (VALL…MPLV).

Its subcellular location is the host membrane. The polypeptide is Putative transmembrane protein ORF807 (Acidianus filamentous virus 1 (isolate United States/Yellowstone) (AFV-1)).